Consider the following 99-residue polypeptide: A-type ATP synthase subunit F (99 aa).

Belongs to the V-ATPase F subunit family. In terms of assembly, has multiple subunits with at least A(3), B(3), C, D, E, F, H, I and proteolipid K(x).

Its subcellular location is the cell membrane. Functionally, component of the A-type ATP synthase that produces ATP from ADP in the presence of a proton gradient across the membrane. This chain is A-type ATP synthase subunit F, found in Methanococcus maripaludis (strain C6 / ATCC BAA-1332).